The following is a 166-amino-acid chain: Regulator of ribonuclease activity A (166 aa).

The protein belongs to the RraA family. In terms of assembly, homotrimer. Binds to both RNA-binding sites in the C-terminal region of Rne and to RhlB.

It is found in the cytoplasm. Its function is as follows. Globally modulates RNA abundance by binding to RNase E (Rne) and regulating its endonucleolytic activity. Can modulate Rne action in a substrate-dependent manner by altering the composition of the degradosome. Modulates RNA-binding and helicase activities of the degradosome. The protein is Regulator of ribonuclease activity A of Pasteurella multocida (strain Pm70).